A 435-amino-acid polypeptide reads, in one-letter code: Glutamyl-tRNA reductase (435 aa).

Substrate contacts are provided by residues 49-52 (TCNR), Ser109, 114-116 (ETQ), and Gln120. Catalysis depends on Cys50, which acts as the Nucleophile. 189–194 (GAGEMS) is an NADP(+) binding site.

Belongs to the glutamyl-tRNA reductase family. In terms of assembly, homodimer.

The catalysed reaction is (S)-4-amino-5-oxopentanoate + tRNA(Glu) + NADP(+) = L-glutamyl-tRNA(Glu) + NADPH + H(+). The protein operates within porphyrin-containing compound metabolism; protoporphyrin-IX biosynthesis; 5-aminolevulinate from L-glutamyl-tRNA(Glu): step 1/2. Its function is as follows. Catalyzes the NADPH-dependent reduction of glutamyl-tRNA(Glu) to glutamate 1-semialdehyde (GSA). In Listeria monocytogenes serovar 1/2a (strain ATCC BAA-679 / EGD-e), this protein is Glutamyl-tRNA reductase.